The sequence spans 152 residues: MVWLGVDLGNARVGLALSDPELTFAHPAGNIHVAGDYFFAIDEVLNVIEDEHVDHVIVGLPLQMDGTEGKSAKKARRWAANLEKRLQAESEDSDSTEYQIPQVSLIDERLTTVSAHRQLFEAHKASNKHRPVVDQQSAVVILQTALDRTREQ.

The protein belongs to the YqgF nuclease family.

It localises to the cytoplasm. In terms of biological role, could be a nuclease involved in processing of the 5'-end of pre-16S rRNA. This Bifidobacterium longum (strain DJO10A) protein is Putative pre-16S rRNA nuclease.